The chain runs to 379 residues: Homoserine O-succinyltransferase (379 aa).

The 310-residue stretch at 51–360 (NAVLICHALS…DAPQGHDAFL (310 aa)) folds into the AB hydrolase-1 domain. Serine 157 functions as the Nucleophile in the catalytic mechanism. Arginine 227 lines the substrate pocket. Active-site residues include aspartate 323 and histidine 356. Aspartate 357 contributes to the substrate binding site.

It belongs to the AB hydrolase superfamily. MetX family. As to quaternary structure, homodimer.

Its subcellular location is the cytoplasm. The enzyme catalyses L-homoserine + succinyl-CoA = O-succinyl-L-homoserine + CoA. The protein operates within amino-acid biosynthesis; L-methionine biosynthesis via de novo pathway; O-succinyl-L-homoserine from L-homoserine: step 1/1. Transfers a succinyl group from succinyl-CoA to L-homoserine, forming succinyl-L-homoserine. In Pseudomonas fluorescens (strain SBW25), this protein is Homoserine O-succinyltransferase.